A 308-amino-acid chain; its full sequence is D-alanine--D-alanine ligase (308 aa).

The ATP-grasp domain maps to 104–304; that stretch reads KQALVPHGIP…YAELVERIVE (201 aa). 131–187 is a binding site for ATP; it reads LPRPYVLKPVNEGSSVGVAIVRDDSNYGNPISRDALGPWQQFDRLLAEPFIKGRELT. Asp255, Glu271, and Asn273 together coordinate Mg(2+).

This sequence belongs to the D-alanine--D-alanine ligase family. Mg(2+) is required as a cofactor. Mn(2+) serves as cofactor.

It is found in the cytoplasm. It carries out the reaction 2 D-alanine + ATP = D-alanyl-D-alanine + ADP + phosphate + H(+). Its pathway is cell wall biogenesis; peptidoglycan biosynthesis. Functionally, cell wall formation. This is D-alanine--D-alanine ligase from Sphingopyxis alaskensis (strain DSM 13593 / LMG 18877 / RB2256) (Sphingomonas alaskensis).